The following is a 741-amino-acid chain: Catalase-peroxidase (741 aa).

A signal peptide spans 1-23 (MLKKIVTALGMSGMLLASSNAIA). The tryptophyl-tyrosyl-methioninium (Trp-Tyr) (with M-249) cross-link spans 102-223 (WHDAGTYRIY…YAATQMGLIY (122 aa)). The active-site Proton acceptor is the H103. Positions 223-249 (YVNPEGPDGKPDIKGAASEIRQAFRAM) form a cross-link, tryptophyl-tyrosyl-methioninium (Tyr-Met) (with W-102). A heme b-binding site is contributed by H264.

The protein belongs to the peroxidase family. Peroxidase/catalase subfamily. In terms of assembly, homodimer or homotetramer. Heme b is required as a cofactor. Formation of the three residue Trp-Tyr-Met cross-link is important for the catalase, but not the peroxidase activity of the enzyme.

It carries out the reaction H2O2 + AH2 = A + 2 H2O. The catalysed reaction is 2 H2O2 = O2 + 2 H2O. Bifunctional enzyme with both catalase and broad-spectrum peroxidase activity. The sequence is that of Catalase-peroxidase from Francisella tularensis subsp. tularensis (strain FSC 198).